Reading from the N-terminus, the 415-residue chain is Small RNA 2'-O-methyltransferase (415 aa).

The S-adenosyl-L-methionine site is built by Ser99 and Asp117. The Mg(2+) site is built by Glu169, Glu172, and His173.

Belongs to the methyltransferase superfamily. HEN1 family. It depends on Mg(2+) as a cofactor.

The protein resides in the cytoplasm. It catalyses the reaction small RNA 3'-end nucleotide + S-adenosyl-L-methionine = small RNA 3'-end 2'-O-methylnucleotide + S-adenosyl-L-homocysteine + H(+). Its function is as follows. Methyltransferase that adds a 2'-O-methyl group at the 3'-end of piRNAs, a class of 24 to 30 nucleotide RNAs that are generated by a Dicer-independent mechanism and are primarily derived from transposons and other repeated sequence elements. This probably protects the 3'-end of piRNAs from uridylation activity and subsequent degradation. Stabilization of piRNAs is essential for gametogenesis. The polypeptide is Small RNA 2'-O-methyltransferase (Bombyx mori (Silk moth)).